The following is a 181-amino-acid chain: TATA-box-binding protein (181 aa).

Repeat copies occupy residues 7 to 83 (IVNV…IKEL) and 98 to 173 (VQNM…LSTL).

Belongs to the TBP family.

Functionally, general factor that plays a role in the activation of archaeal genes transcribed by RNA polymerase. Binds specifically to the TATA box promoter element which lies close to the position of transcription initiation. The polypeptide is TATA-box-binding protein (tbp) (Methanothermococcus thermolithotrophicus (Methanococcus thermolithotrophicus)).